The sequence spans 419 residues: MPIFKKTLIVLSFICLISILIYLNMYLFGTSTVGIYGVILITYLVIKLGLSFLYEPFKGNPHDYKVAAVIPSYNEDAESLLETLKSVLAQTYPLSEIYIVDDGSSNTDAIQLIEEYVNREVDICRNVIVHRSLVNKGKRHAQAWAFERSDADVFLTVDSDTYIYPNALEELLKSFNDETVYAATGHLNARNRQTNLLTRLTDIRYDNAFGVERAAQSLTGNILVCSGPLSIYRREVIIPNLERYKNQTFLGLPVSIGDDRCLTNYAIDLGRTVYQSTARCDTDVPFQLKSYLKQQNRWNKSFFRESIISVKKILSNPIVALWTIFEVVMFMMLIVAIGNLLFNQAIQLDLIKLFAFLSIIFIVALCRNVHYMVKHPASFLLSPLYGILHLFVLQPLKLYSLCTIKNTEWGTRKKVTIFK.

5 helical membrane passes run 8-28 (LIVLSFICLISILIYLNMYLF), 33-53 (VGIYGVILITYLVIKLGLSFL), 318-338 (IVALWTIFEVVMFMMLIVAIG), 345-365 (AIQLDLIKLFAFLSIIFIVAL), and 376-396 (PASFLLSPLYGILHLFVLQPL).

This sequence belongs to the NodC/HAS family. It depends on Mg(2+) as a cofactor.

It localises to the cell membrane. It carries out the reaction [hyaluronan](n) + UDP-N-acetyl-alpha-D-glucosamine = N-acetyl-beta-D-glucosaminyl-(1-&gt;4)-[hyaluronan](n) + UDP + H(+). The catalysed reaction is N-acetyl-beta-D-glucosaminyl-(1-&gt;4)-[hyaluronan](n) + UDP-alpha-D-glucuronate = [hyaluronan](n+1) + UDP + H(+). The protein operates within glycan biosynthesis; hyaluronan biosynthesis. In terms of biological role, glycosaminoglycan synthesis. The hyaluronic acid capsule is involved in the pathogenicity of group A Streptococci; it may be the major virulence determinant. The polypeptide is Hyaluronan synthase (hasA) (Streptococcus pyogenes serotype M3 (strain ATCC BAA-595 / MGAS315)).